The chain runs to 708 residues: Lactotransferrin (708 aa).

Positions methionine 1 to alanine 19 are cleaved as a signal peptide. 2 Transferrin-like domains span residues valine 25 to glutamate 352 and valine 364 to lysine 693. 2 disulfides stabilise this stretch: cysteine 28–cysteine 64 and cysteine 38–cysteine 55. Aspartate 79 contacts Fe cation. The active site involves lysine 92. Tyrosine 111 is a Fe cation binding site. Intrachain disulfides connect cysteine 134-cysteine 217, cysteine 176-cysteine 192, cysteine 179-cysteine 202, cysteine 189-cysteine 200, and cysteine 250-cysteine 264. Hydrogencarbonate contacts are provided by threonine 136, arginine 140, alanine 142, and glycine 143. A Fe cation-binding site is contributed by tyrosine 211. An N-linked (GlcNAc...) (high mannose) asparagine glycan is attached at asparagine 252. Histidine 272 is a binding site for Fe cation. The active-site Nucleophile is the serine 278. N-linked (GlcNAc...) (hybrid) asparagine glycosylation is present at asparagine 300. Cystine bridges form between cysteine 367/cysteine 399 and cysteine 377/cysteine 390. Residues aspartate 414 and tyrosine 452 each contribute to the Fe cation site. 8 disulfide bridges follow: cysteine 424–cysteine 703, cysteine 444–cysteine 666, cysteine 476–cysteine 551, cysteine 500–cysteine 694, cysteine 510–cysteine 524, cysteine 521–cysteine 534, cysteine 592–cysteine 606, and cysteine 644–cysteine 649. Residues threonine 478, arginine 482, alanine 484, and glycine 485 each coordinate hydrogencarbonate. Asparagine 495 carries N-linked (GlcNAc...) (complex) asparagine; alternate glycosylation. Residue asparagine 495 is glycosylated (N-linked (GlcNAc...) (high mannose) asparagine; alternate). Asparagine 495 is a glycosylation site (N-linked (GlcNAc...) (hybrid) asparagine; alternate). A Fe cation-binding site is contributed by tyrosine 545. Residue asparagine 564 is glycosylated (N-linked (GlcNAc...) (high mannose) asparagine). Histidine 614 lines the Fe cation pocket.

It belongs to the transferrin family. As to quaternary structure, monomer. Found in a complex with LTF, CLU, EPPIN and SEMG1. Found in a complex with MPO and LTF; interacts directly with CP, allows Fe(3+) incorporation into LTF and activation of CP ferroxidase activity. In terms of processing, poly-N-acetyllactosaminic carbohydrate moiety seems to be needed for TLR4 activation.

Its subcellular location is the secreted. The protein resides in the cytoplasmic granule. Its function is as follows. Transferrins are iron binding transport proteins which can bind two Fe(3+) ions in association with the binding of an anion, usually bicarbonate. Functionally, major iron-binding and multifunctional protein found in exocrine fluids such as breast milk and mucosal secretions. Has antimicrobial activity, which depends on the extracellular cation concentration. Antimicrobial properties include bacteriostasis, which is related to its ability to sequester free iron and thus inhibit microbial growth, as well as direct bactericidal properties leading to the release of lipopolysaccharides from the bacterial outer membrane. Can also prevent bacterial biofilm development in P.aeruginosa infection. Has weak antifungal activity against C.albicans. Has anabolic, differentiating and anti-apoptotic effects on osteoblasts and can also inhibit osteoclastogenesis, possibly playing a role in the regulation of bone growth. Promotes binding of species C adenoviruses to epithelial cells, promoting adenovirus infection. Can inhibit papillomavirus infections. Stimulates the TLR4 signaling pathway leading to NF-kappa-B activation and subsequent pro-inflammatory cytokine production while also interfering with the lipopolysaccharide (LPS)-stimulated TLR4 signaling. Inhibits neutrophil granulocyte migration to sites of apoptosis, when secreted by apoptotic cells. Stimulates VEGFA-mediated endothelial cell migration and proliferation. Binds heparin, chondroitin sulfate and possibly other glycosaminoglycans (GAGs). Also binds specifically to pneumococcal surface protein A (PspA), the lipid A portion of bacterial lipopolysaccharide (LPS), lysozyme and DNA. Lactoferricin binds to the bacterial surface and is crucial for the bactericidal functions. Has some antiviral activity against papillomavirus infection. N-terminal region shows strong antifungal activity against C.albicans. Contains two BBXB heparin-binding consensus sequences that appear to form the predominate functional GAG-binding site. In terms of biological role, the lactotransferrin transferrin-like domain 1 functions as a serine protease of the peptidase S60 family that cuts arginine rich regions. This function contributes to the antimicrobial activity. Shows a preferential cleavage at -Arg-Ser-Arg-Arg-|- and -Arg-Arg-Ser-Arg-|-, and of Z-Phe-Arg-|-aminomethylcoumarin sites. The protein is Lactotransferrin (LTF) of Bubalus bubalis (Domestic water buffalo).